The chain runs to 505 residues: Cholesteryl ester transfer protein (505 aa).

The signal sequence occupies residues 1–24 (MLWAGGMRLGMARILLMLVHAAAA). 2 N-linked (GlcNAc...) asparagine glycosylation sites follow: Asn-68 and Asn-114. Cys-169 and Cys-210 are disulfide-bonded. Residues Asn-266, Asn-344, and Asn-422 are each glycosylated (N-linked (GlcNAc...) asparagine).

Belongs to the BPI/LBP/Plunc superfamily. BPI/LBP family. Highly expressed in liver brain, heart, and spleen. Secreted in plasma.

Its subcellular location is the secreted. The enzyme catalyses cholesteryl (9Z-octadecenoate)(in) = cholesteryl (9Z-octadecenoate)(out). It catalyses the reaction 1,2,3-tri-(9Z-octadecenoyl)-glycerol(in) = 1,2,3-tri-(9Z-octadecenoyl)-glycerol(out). It carries out the reaction cholesteryl (9Z,12Z)-octadecadienoate(in) = cholesteryl (9Z,12Z)-octadecadienoate(out). Functionally, involved in the transfer of neutral lipids, including cholesteryl ester and triglyceride, among lipoprotein particles. Allows the net movement of cholesteryl ester from high density lipoproteins/HDL to triglyceride-rich very low density lipoproteins/VLDL, and the equimolar transport of triglyceride from VLDL to HDL. Regulates the reverse cholesterol transport, by which excess cholesterol is removed from peripheral tissues and returned to the liver for elimination. This Gallus gallus (Chicken) protein is Cholesteryl ester transfer protein.